Consider the following 2946-residue polypeptide: Neurobeachin (2946 aa).

Residues 971-995 are disordered; sequence ENIKKGKKGNVSTISGLSSQTTGAK. The span at 980 to 993 shows a compositional bias: polar residues; it reads NVSTISGLSSQTTG. Phosphoserine is present on residues Ser-1011 and Ser-1014. A WD 1 repeat occupies 1326–1368; the sequence is TTMFRIPEFKWSPMHQRLLTDLLFALETDVHVWRSHSTKSVMD. Disordered regions lie at residues 1490 to 1531, 1651 to 1675, 1711 to 1731, and 1841 to 1860; these read QRDR…LSPI, TIKE…HTDS, VKKS…PATS, and GAVD…VNGA. Polar residues predominate over residues 1497–1517; sequence SSHGSSKPQEVPQSVTATAAS. Ser-1529 bears the Phosphoserine mark. 2 positions are modified to phosphoserine: Ser-1714 and Ser-1717. Positions 1716-1731 are enriched in polar residues; sequence ESLTENPSETLKPATS. Over residues 1845–1855 the composition is skewed to low complexity; it reads SGSSSSSSSSS. Ser-2138 bears the Phosphoserine mark. The 109-residue stretch at 2147 to 2255 folds into the BEACH-type PH domain; that stretch reads NLAGPVVLST…TVKKVVYSLP (109 aa). Residues 2274-2563 form the BEACH domain; the sequence is ATPRQLYKSS…QLLIEPHPPR (290 aa). The residue at position 2575 (Ser-2575) is a Phosphoserine. WD repeat units follow at residues 2718 to 2761, 2778 to 2818, 2860 to 2899, and 2902 to 2941; these read GHWD…HIIG, GHDH…RALE, EIND…QLYI, and GCDA…WHYE.

It belongs to the WD repeat neurobeachin family. In terms of assembly, interacts with RII subunit of PKA. Predominant in many brain structures. Also expressed at medium levels in spleen, thymus, prostate, testis and ovary. Low level expression is seen in heart, kidney, pancreas, skeletal muscle and intestine.

The protein localises to the cytoplasm. Its subcellular location is the membrane. In terms of biological role, binds to type II regulatory subunits of protein kinase A and anchors/targets them to the membrane. May anchor the kinase to cytoskeletal and/or organelle-associated proteins. In Homo sapiens (Human), this protein is Neurobeachin.